The primary structure comprises 319 residues: Acetyl-coenzyme A carboxylase carboxyl transferase subunit alpha (319 aa).

The 262-residue stretch at 35–296 (NLDEEVQRLR…KAQLLADLLD (262 aa)) folds into the CoA carboxyltransferase C-terminal domain.

This sequence belongs to the AccA family. In terms of assembly, acetyl-CoA carboxylase is a heterohexamer composed of biotin carboxyl carrier protein (AccB), biotin carboxylase (AccC) and two subunits each of ACCase subunit alpha (AccA) and ACCase subunit beta (AccD).

Its subcellular location is the cytoplasm. It carries out the reaction N(6)-carboxybiotinyl-L-lysyl-[protein] + acetyl-CoA = N(6)-biotinyl-L-lysyl-[protein] + malonyl-CoA. The protein operates within lipid metabolism; malonyl-CoA biosynthesis; malonyl-CoA from acetyl-CoA: step 1/1. Component of the acetyl coenzyme A carboxylase (ACC) complex. First, biotin carboxylase catalyzes the carboxylation of biotin on its carrier protein (BCCP) and then the CO(2) group is transferred by the carboxyltransferase to acetyl-CoA to form malonyl-CoA. This chain is Acetyl-coenzyme A carboxylase carboxyl transferase subunit alpha, found in Pectobacterium atrosepticum (strain SCRI 1043 / ATCC BAA-672) (Erwinia carotovora subsp. atroseptica).